Consider the following 345-residue polypeptide: Probable S-adenosylmethionine carrier 2, chloroplastic (345 aa).

The transit peptide at 1 to 31 (MTKALSGFCCSLSLSTLVRSSSSHMDSDIVS) directs the protein to the chloroplast. 3 Solcar repeats span residues 76 to 148 (RVLY…TKQK), 157 to 239 (LSAV…LRIG), and 252 to 334 (ENAM…TKQI). Transmembrane regions (helical) follow at residues 82 to 102 (LITG…IDTI), 121 to 141 (YSGL…FFGV), 156 to 176 (NLSA…SSIV), 254 to 274 (AMIG…LDVI), and 309 to 329 (GMGP…GVLE).

This sequence belongs to the mitochondrial carrier (TC 2.A.29) family. In terms of tissue distribution, expressed at low levels in seedlings, leaves, flowers, stems and roots.

Its subcellular location is the plastid. The protein localises to the chloroplast membrane. Functionally, probable S-adenosylmethionine (SAM) transporter able to catalyze both uniport and exchange reactions through membranes. The protein is Probable S-adenosylmethionine carrier 2, chloroplastic (SAMC2) of Arabidopsis thaliana (Mouse-ear cress).